The sequence spans 88 residues: Cell division topological specificity factor (88 aa).

This sequence belongs to the MinE family.

Its function is as follows. Prevents the cell division inhibition by proteins MinC and MinD at internal division sites while permitting inhibition at polar sites. This ensures cell division at the proper site by restricting the formation of a division septum at the midpoint of the long axis of the cell. The polypeptide is Cell division topological specificity factor (Methylibium petroleiphilum (strain ATCC BAA-1232 / LMG 22953 / PM1)).